The following is a 272-amino-acid chain: Tryptophan synthase alpha chain (272 aa).

Catalysis depends on proton acceptor residues Glu49 and Glu60.

The protein belongs to the TrpA family. Tetramer of two alpha and two beta chains.

The enzyme catalyses (1S,2R)-1-C-(indol-3-yl)glycerol 3-phosphate + L-serine = D-glyceraldehyde 3-phosphate + L-tryptophan + H2O. It functions in the pathway amino-acid biosynthesis; L-tryptophan biosynthesis; L-tryptophan from chorismate: step 5/5. Functionally, the alpha subunit is responsible for the aldol cleavage of indoleglycerol phosphate to indole and glyceraldehyde 3-phosphate. The polypeptide is Tryptophan synthase alpha chain (Legionella pneumophila (strain Corby)).